A 357-amino-acid polypeptide reads, in one-letter code: Protein BMRF2 (357 aa).

Topologically, residues 1–11 (MFSCKQHLSLG) are virion surface. A membrane pass occupies residues 12-32 (ACVFCLGLLASTPFIWCFVFA). Residues 33 to 46 (NLLSLEIFSPWQTH) lie on the Intravirion side of the membrane. The chain crosses the lipid bilayer at residues 47–67 (VYRLGFPTACLMAVLWTLVPA). Residues 68 to 70 (KHA) lie on the Virion surface side of the membrane. The hydrophobic stretch at 71 to 91 (VRAVTPAIMLNIASALIFFSL) threads the membrane. Residues 92–98 (RVYSTST) lie on the Intravirion side of the membrane. A membrane pass occupies residues 99-121 (WVSAPCLFLANLPLLCLWPRLAI). Over 122-133 (EIVYICPAIHQR) the chain is Virion surface. The hydrophobic stretch at 134–154 (FFELGLLLACTIFALSVVSRA) threads the membrane. Over 155–158 (LEVS) the chain is Intravirion. A transmembrane helix spans residues 159–179 (AVFMSPFFIFLALGSGSLAGA). The Virion surface segment spans residues 180-217 (RRNQIYTSGLERRRSIFCARGDHSVASLKETLHKCPWD). Positions 199-201 (RGD) match the Integrin binding site motif. The hydrophobic stretch at 218–238 (LLAISALTVLVVCVMIVLHVH) threads the membrane. Topologically, residues 239–240 (AE) are intravirion. Over 241 to 261 (VFFGLSRYLPLFLCGAMASGG) the chain traverses the membrane. Over 262-267 (LYLGHS) the chain is Virion surface. A transmembrane helix spans residues 268-288 (SIIACVMATLCTLSSVVVYFL). Topologically, residues 289-298 (HETLGPLGKT) are intravirion. Residues 299 to 319 (VLFISIFVYYFSGVAALSAAM) are membrane-embedded. Topologically, residues 320–335 (RYKLKKFVNGPLVHLR) are virion surface. A membrane pass occupies residues 336–356 (VVYMCCFVFTFCEYLLVTFIK). Residue S357 is a topological domain, intravirion.

Belongs to the herpesviridae BMRF2 family. In terms of assembly, interacts with BDLF2. Interacts with host beta1 integrin family. Extensively glycosylated by O-linked oligosaccharides.

Its subcellular location is the virion membrane. The protein resides in the host cell membrane. Functionally, facilitates virus attachment to oral epithelial cells by binding to host beta1 integrin family. Participates in rearrangement of cellular actin to increase intercellular contacts by binding BDLF2 and thereby promote virus cell-to-cell spreading. The sequence is that of Protein BMRF2 from Homo sapiens (Human).